The sequence spans 667 residues: Glycine--tRNA ligase beta subunit (667 aa).

It belongs to the class-II aminoacyl-tRNA synthetase family. Tetramer of two alpha and two beta subunits.

The protein resides in the cytoplasm. It catalyses the reaction tRNA(Gly) + glycine + ATP = glycyl-tRNA(Gly) + AMP + diphosphate. The protein is Glycine--tRNA ligase beta subunit of Rickettsia canadensis (strain McKiel).